Here is a 291-residue protein sequence, read N- to C-terminus: MTERDFDTPVETPTVQPAPAQGAKPAQTVPVVAVVLAAGFGTRFDPDNPKQLVSVGGKPIVCWSIDAFEHCDRVSDIVVVVNPKVRGEVETLVGEMGYTKVRVIIDGGDERVDSTAAALDMLATAGIPDDAKILIHDAVRPFVEQSAIDGSIDALDQFTAATVAYASTDTVLLTEDLGDLKVVKSVPDRPNTFRAQTPQSFRFATIRHAYDLAAADPDFHPTDDTRVVVDYLPDEPVAIVSGAETNLKITTLEDIPTAERIAEEILGRDPKEEARARMHALLAQAAGQMHR.

The disordered stretch occupies residues 1-23; sequence MTERDFDTPVETPTVQPAPAQGA.

It belongs to the IspD/TarI cytidylyltransferase family. IspD subfamily.

It catalyses the reaction 2-C-methyl-D-erythritol 4-phosphate + CTP + H(+) = 4-CDP-2-C-methyl-D-erythritol + diphosphate. It participates in isoprenoid biosynthesis; isopentenyl diphosphate biosynthesis via DXP pathway; isopentenyl diphosphate from 1-deoxy-D-xylulose 5-phosphate: step 2/6. Its function is as follows. Catalyzes the formation of 4-diphosphocytidyl-2-C-methyl-D-erythritol from CTP and 2-C-methyl-D-erythritol 4-phosphate (MEP). The chain is 2-C-methyl-D-erythritol 4-phosphate cytidylyltransferase from Bifidobacterium longum (strain DJO10A).